The following is a 180-amino-acid chain: Large ribosomal subunit protein uL5 (180 aa).

It belongs to the universal ribosomal protein uL5 family. In terms of assembly, part of the 50S ribosomal subunit; part of the 5S rRNA/L5/L18/L25 subcomplex. Contacts the 5S rRNA and the P site tRNA. Forms a bridge to the 30S subunit in the 70S ribosome.

Functionally, this is one of the proteins that bind and probably mediate the attachment of the 5S RNA into the large ribosomal subunit, where it forms part of the central protuberance. In the 70S ribosome it contacts protein S13 of the 30S subunit (bridge B1b), connecting the 2 subunits; this bridge is implicated in subunit movement. Contacts the P site tRNA; the 5S rRNA and some of its associated proteins might help stabilize positioning of ribosome-bound tRNAs. In Chloroflexus aggregans (strain MD-66 / DSM 9485), this protein is Large ribosomal subunit protein uL5.